The chain runs to 783 residues: Protein phosphatase 2C 29 (783 aa).

The segment at 151–194 (SFSALPLQPGPDRSGLFMSGPIERGATSGPLDPPAGEISRSNSA) is disordered. The residue at position 199 (Ser-199) is a Phosphoserine. Residues 260–770 (SSGENDLQWA…DDCTVLVIAL (511 aa)) enclose the PPM-type phosphatase domain. Mn(2+) is bound by residues Asp-295 and Gly-296. Residues 555-595 (ETGESVETAERVEERRNDLDRDDGNKEPLVVDSSDSTVNNE) are disordered. Residues 562 to 580 (TAERVEERRNDLDRDDGNK) are compositionally biased toward basic and acidic residues. Positions 701 and 761 each coordinate Mn(2+).

This sequence belongs to the PP2C family. Mg(2+) is required as a cofactor. It depends on Mn(2+) as a cofactor. As to expression, expressed in roots, leaves, stems, inflorescences, flowers and developing vascular tissue.

It is found in the nucleus. It carries out the reaction O-phospho-L-seryl-[protein] + H2O = L-seryl-[protein] + phosphate. It catalyses the reaction O-phospho-L-threonyl-[protein] + H2O = L-threonyl-[protein] + phosphate. Its function is as follows. Involved in the regulation of pedicel length and of CLAVATA pathways controlling stem cell identity at shoot and flower meristems. The protein is Protein phosphatase 2C 29 (PLL1) of Arabidopsis thaliana (Mouse-ear cress).